A 350-amino-acid chain; its full sequence is MVVDDSAVVRQVVSSVLKSDSEIEVCGAVADPLFAMTRMRMQWPDVIVLDIEMPRMDGISFLKKIMAERPTPVVICSTLTEKGADTTMQAISAGAVEIITKPKVGLKGFLHDSAKVLINAVKAASRANLKPLQRAMASNLKVTPKLSADAVLAEGNTSRLKTTEQLVAIGTSTGGTQALELVLKALPRVSPGIVIVQHMPEKFTAAFAERLDSLCEISVKEAKHKMRVLPGQALIAPGGKHMLLKRSGAQYYVEVIDGPLVSRHRPSVDVLFRSVAQSASGNALGIIMTGMGDDGVKGMLEMRRAGAVTLAQDEASCVVYGMPKEAVKCGAVERSLSLSEIPQAILDCSH.

The Response regulatory domain maps to 1–116 (MVVDDSAVVR…KGFLHDSAKV (116 aa)). Residue aspartate 50 is modified to 4-aspartylphosphate. Residues 160–350 (LKTTEQLVAI…IPQAILDCSH (191 aa)) form the CheB-type methylesterase domain. Catalysis depends on residues serine 172, histidine 198, and aspartate 294.

Belongs to the CheB family. Post-translationally, phosphorylated by CheA. Phosphorylation of the N-terminal regulatory domain activates the methylesterase activity.

It localises to the cytoplasm. The catalysed reaction is [protein]-L-glutamate 5-O-methyl ester + H2O = L-glutamyl-[protein] + methanol + H(+). The enzyme catalyses L-glutaminyl-[protein] + H2O = L-glutamyl-[protein] + NH4(+). Involved in chemotaxis. Part of a chemotaxis signal transduction system that modulates chemotaxis in response to various stimuli. Catalyzes the demethylation of specific methylglutamate residues introduced into the chemoreceptors (methyl-accepting chemotaxis proteins or MCP) by CheR. Also mediates the irreversible deamidation of specific glutamine residues to glutamic acid. This Photobacterium profundum (strain SS9) protein is Protein-glutamate methylesterase/protein-glutamine glutaminase 1.